A 22-amino-acid chain; its full sequence is Chymotrypsin inhibitor (22 aa).

The segment at 1–22 is disordered; that stretch reads FDESFGFQGPSTYEKTPLGEPA.

In terms of tissue distribution, hemolymph.

The protein resides in the secreted. It is found in the extracellular space. In terms of biological role, inhibits chymotrypsin stoichiometrically. Also inhibits porcine pancreatic elastase and trypsin. The sequence is that of Chymotrypsin inhibitor from Mythimna unipuncta (Armyworm moth).